A 327-amino-acid polypeptide reads, in one-letter code: tRNA dimethylallyltransferase (327 aa).

14-21 (GPTASGKT) contacts ATP. 16 to 21 (TASGKT) contributes to the substrate binding site. Interaction with substrate tRNA regions lie at residues 39-42 (DSAL) and 163-167 (QRIQR).

Belongs to the IPP transferase family. As to quaternary structure, monomer. It depends on Mg(2+) as a cofactor.

It carries out the reaction adenosine(37) in tRNA + dimethylallyl diphosphate = N(6)-dimethylallyladenosine(37) in tRNA + diphosphate. Its function is as follows. Catalyzes the transfer of a dimethylallyl group onto the adenine at position 37 in tRNAs that read codons beginning with uridine, leading to the formation of N6-(dimethylallyl)adenosine (i(6)A). The polypeptide is tRNA dimethylallyltransferase (Xanthomonas oryzae pv. oryzae (strain KACC10331 / KXO85)).